Consider the following 448-residue polypeptide: Glutamyl-tRNA(Gln) amidotransferase subunit D (448 aa).

Positions 92–423 (SEVKIISTGG…DKIRSLMLTN (332 aa)) constitute an Asparaginase/glutaminase domain. Catalysis depends on residues T102, T178, D179, and K257.

It belongs to the asparaginase 1 family. GatD subfamily. In terms of assembly, heterodimer of GatD and GatE.

It catalyses the reaction L-glutamyl-tRNA(Gln) + L-glutamine + ATP + H2O = L-glutaminyl-tRNA(Gln) + L-glutamate + ADP + phosphate + H(+). Allows the formation of correctly charged Gln-tRNA(Gln) through the transamidation of misacylated Glu-tRNA(Gln) in organisms which lack glutaminyl-tRNA synthetase. The reaction takes place in the presence of glutamine and ATP through an activated gamma-phospho-Glu-tRNA(Gln). The GatDE system is specific for glutamate and does not act on aspartate. The sequence is that of Glutamyl-tRNA(Gln) amidotransferase subunit D from Sulfurisphaera tokodaii (strain DSM 16993 / JCM 10545 / NBRC 100140 / 7) (Sulfolobus tokodaii).